The primary structure comprises 482 residues: 2-succinylbenzoate--CoA ligase (482 aa).

It belongs to the ATP-dependent AMP-binding enzyme family. MenE subfamily.

It carries out the reaction 2-succinylbenzoate + ATP + CoA = 2-succinylbenzoyl-CoA + AMP + diphosphate. It participates in quinol/quinone metabolism; 1,4-dihydroxy-2-naphthoate biosynthesis; 1,4-dihydroxy-2-naphthoate from chorismate: step 5/7. Its pathway is quinol/quinone metabolism; menaquinone biosynthesis. Its function is as follows. Converts 2-succinylbenzoate (OSB) to 2-succinylbenzoyl-CoA (OSB-CoA). The sequence is that of 2-succinylbenzoate--CoA ligase from Bacillus cereus (strain AH820).